Reading from the N-terminus, the 866-residue chain is Protein SEY1 (866 aa).

Topologically, residues 1-746 are cytoplasmic; that stretch reads MVSNGHFAYA…KRSAIGGMTQ (746 aa). The GB1/RHD3-type G domain maps to 48–305; sequence GFNYHLISVF…IPADGFAVYA (258 aa). 58–65 is a GTP binding site; it reads GSQSTGKS. Residues 480–506 adopt a coiled-coil conformation; the sequence is SNYTQELALYQKDLEKISAQLRKDEMR. The chain crosses the membrane as a helical span at residues 747-767; sequence IPVYFYILLLALGWNEIIAVL. Residues 768–770 lie on the Lumenal side of the membrane; the sequence is RNP. The helical transmembrane segment at 771-791 threads the bilayer; sequence VYFFMLFLCSVAAYIIYQLNL. Over 792 to 866 the chain is Cytoplasmic; it reads WGPMVKMAEA…DDEVEGEETW (75 aa). Residues 840–866 are disordered; that stretch reads SHVRSGRNATKINERDDDDEVEGEETW. Acidic residues predominate over residues 854 to 866; it reads RDDDDEVEGEETW.

It belongs to the TRAFAC class dynamin-like GTPase superfamily. GB1/RHD3 GTPase family. RHD3 subfamily.

Its subcellular location is the endoplasmic reticulum membrane. Cooperates with the reticulon proteins and tubule-shaping DP1 family proteins to generate and maintain the structure of the tubular endoplasmic reticulum network. Has GTPase activity, which is required for its function in ER organization. This chain is Protein SEY1, found in Coccidioides immitis (strain RS) (Valley fever fungus).